Consider the following 554-residue polypeptide: Potassium-transporting ATPase potassium-binding subunit (554 aa).

10 helical membrane passes run 1–21 (MSPV…LALA), 60–80 (PAYL…LYVL), 131–151 (GLAV…VALV), 174–194 (VRVL…CGAI), 246–266 (PGPF…FALT), 279–299 (GYAI…LMMW), 375–395 (GLYG…LMVG), 412–432 (FAAC…AAAM), 481–501 (IGIV…ALAG), and 525–545 (GLLV…ALAL).

Belongs to the KdpA family. The system is composed of three essential subunits: KdpA, KdpB and KdpC.

The protein resides in the cell membrane. In terms of biological role, part of the high-affinity ATP-driven potassium transport (or Kdp) system, which catalyzes the hydrolysis of ATP coupled with the electrogenic transport of potassium into the cytoplasm. This subunit binds the extracellular potassium ions and delivers the ions to the membrane domain of KdpB through an intramembrane tunnel. In Streptomyces avermitilis (strain ATCC 31267 / DSM 46492 / JCM 5070 / NBRC 14893 / NCIMB 12804 / NRRL 8165 / MA-4680), this protein is Potassium-transporting ATPase potassium-binding subunit.